We begin with the raw amino-acid sequence, 554 residues long: Glutamine--tRNA ligase (554 aa).

Positions P34–H44 match the 'HIGH' region motif. Residues E35 to N37 and H41 to S47 each bind ATP. Positions 67 and 212 each coordinate L-glutamine. Residues T231, R261–L262, and M269–K271 each bind ATP. Residues V268–R272 carry the 'KMSKS' region motif. The interaction with tRNA stretch occupies residues T317–E324.

Belongs to the class-I aminoacyl-tRNA synthetase family. Monomer.

The protein resides in the cytoplasm. It catalyses the reaction tRNA(Gln) + L-glutamine + ATP = L-glutaminyl-tRNA(Gln) + AMP + diphosphate. The protein is Glutamine--tRNA ligase of Escherichia coli O127:H6 (strain E2348/69 / EPEC).